We begin with the raw amino-acid sequence, 249 residues long: DNA repair protein RecO (249 aa).

The protein belongs to the RecO family.

In terms of biological role, involved in DNA repair and RecF pathway recombination. The sequence is that of DNA repair protein RecO from Lawsonia intracellularis (strain PHE/MN1-00).